A 270-amino-acid polypeptide reads, in one-letter code: Sulfur carrier protein FdhD (270 aa).

Basic and acidic residues-rich tracts occupy residues methionine 1–glutamate 10 and arginine 20–tryptophan 30. The interval methionine 1–tryptophan 30 is disordered. The Cysteine persulfide intermediate role is filled by cysteine 117.

It belongs to the FdhD family.

The protein resides in the cytoplasm. Functionally, required for formate dehydrogenase (FDH) activity. Acts as a sulfur carrier protein that transfers sulfur from IscS to the molybdenum cofactor prior to its insertion into FDH. The polypeptide is Sulfur carrier protein FdhD (Chromobacterium violaceum (strain ATCC 12472 / DSM 30191 / JCM 1249 / CCUG 213 / NBRC 12614 / NCIMB 9131 / NCTC 9757 / MK)).